A 294-amino-acid polypeptide reads, in one-letter code: MECPAPDATDAADPGEAGPYKGSEEPEGREPDGVRFDRERARRLWEAVSGAQPAGREEVEHMIQKNQCLFTSTQCKVCCAMLISESQKLAHYQSKKHANKVKRYLAIHGMETIKGDVKRLDSDQKSSRSKDKNHCCPICNMTFSSPAVAQSHYLGKTHAKSLKLKQQSTKGAALQQNREMLDPDKFCSLCHSTFNDPAMAQQHYMGKRHRKQETKLKLMAHYGRLADPAVSDLPAGKGYPCKTCKIVLNSIEQYQAHVSGFKHKNQSPKTLVTLGSQTPVQTQPTPKDSSTVQD.

Methionine 1 is modified (N-acetylmethionine). Low complexity predominate over residues methionine 1 to proline 19. Residues methionine 1–arginine 35 form a disordered region. Over residues glycine 22–arginine 35 the composition is skewed to basic and acidic residues. The Matrin-type 1 zinc-finger motif lies at phenylalanine 70 to tyrosine 104. 4 residues coordinate Zn(2+): cysteine 75, cysteine 78, histidine 91, and histidine 97. A Glycyl lysine isopeptide (Lys-Gly) (interchain with G-Cter in SUMO2) cross-link involves residue lysine 114. The segment at aspartate 131 to lysine 165 adopts a Matrin-type 2 zinc-finger fold. Zn(2+)-binding residues include cysteine 136, cysteine 139, histidine 152, and histidine 158. A Glycyl lysine isopeptide (Lys-Gly) (interchain with G-Cter in SUMO2) cross-link involves residue lysine 170. 2 consecutive Matrin-type zinc fingers follow at residues aspartate 182–leucine 216 and glycine 236–threonine 270. Residues lysine 269–aspartate 294 are disordered.

Forms a heteromeric complex with XPO5 and ILF3. Found in a nuclear export complex with XPO5, RAN, ILF3, ZNF346 and double-stranded RNA. Interacts with XPO5. Interacts with ILF3 in an RNA-independent manner. Expressed in all tissues tested, including heart, brain, spleen, lung, liver, muscle, kidney and testis. Exogenous expression induced apoptosis.

It is found in the nucleus. It localises to the nucleolus. Its subcellular location is the cytoplasm. Functionally, binds with low affinity to dsDNA and ssRNA, and with high affinity to dsRNA, with no detectable sequence specificity. May bind to specific miRNA hairpins. This Mus musculus (Mouse) protein is Zinc finger protein 346 (Znf346).